Reading from the N-terminus, the 109-residue chain is uncharacterized protein (109 aa).

Residues 36 to 109 form a disordered region; sequence NSSNNLNNNN…KKKKKKRRVK (74 aa). Low complexity predominate over residues 39 to 88; sequence NNLNNNNFNENNLKNNNNRNGNNNNNNNNNNNNNNNNNNNNNNNNNNNNN. The span at 99–109 shows a compositional bias: basic residues; the sequence is QKKKKKKRRVK.

This is an uncharacterized protein from Dictyostelium discoideum (Social amoeba).